Reading from the N-terminus, the 285-residue chain is 4-hydroxybenzoate octaprenyltransferase (285 aa).

The next 7 membrane-spanning stretches (helical) occupy residues 20–37 (IGIYLVLWPALWALWLAA), 96–116 (FFFVLCLLAFGLVLFLNPFTI), 138–158 (WPQAFLGAAFAWAIPMAFAAI), 166–186 (AWVIFGVTLVWALVYDTAYAV), 211–231 (IIGFFQAIMLLGFLWIGDLFG), 234–254 (WLYYGSVLIAAGFFVYHQYLL), and 262–282 (AFKAFLNNHWVGLVILIGIML).

The protein belongs to the UbiA prenyltransferase family. The cofactor is Mg(2+).

The protein localises to the cell inner membrane. It catalyses the reaction all-trans-octaprenyl diphosphate + 4-hydroxybenzoate = 4-hydroxy-3-(all-trans-octaprenyl)benzoate + diphosphate. It participates in cofactor biosynthesis; ubiquinone biosynthesis. Functionally, catalyzes the prenylation of para-hydroxybenzoate (PHB) with an all-trans polyprenyl group. Mediates the second step in the final reaction sequence of ubiquinone-8 (UQ-8) biosynthesis, which is the condensation of the polyisoprenoid side chain with PHB, generating the first membrane-bound Q intermediate 3-octaprenyl-4-hydroxybenzoate. The chain is 4-hydroxybenzoate octaprenyltransferase from Hydrogenovibrio crunogenus (strain DSM 25203 / XCL-2) (Thiomicrospira crunogena).